Here is a 354-residue protein sequence, read N- to C-terminus: Bifunctional transcriptional activator/DNA repair enzyme Ada (354 aa).

The tract at residues 1-171 is methylphosphotriester-DNA--protein-cysteine methyltransferase; the sequence is MKKATCLTDD…SSSYYRKADE (171 aa). Thr34 is a DNA binding site. The active-site Nucleophile; methyl group acceptor from methylphosphotriester is Cys38. Cys38 and Cys42 together coordinate Zn(2+). The DNA site is built by Arg43, Arg45, and Arg67. 2 residues coordinate Zn(2+): Cys69 and Cys72. The HTH araC/xylS-type domain maps to 85-183; that stretch reads DKITHACRLL…GMTAKQFRHG (99 aa). Positions 102-121 form a DNA-binding region, H-T-H motif; that stretch reads LEALADQVAMSPFHLHRLFK. The segment at 181 to 354 is methylated-DNA--protein-cysteine methyltransferase; the sequence is RHGGENLAVR…LRREAENEER (174 aa). Cys321 acts as the Nucleophile; methyl group acceptor from either O6-methylguanine or O4-methylthymine in catalysis.

The protein in the C-terminal section; belongs to the MGMT family. Zn(2+) is required as a cofactor.

It carries out the reaction (2'-deoxyribonucleoside 5'-methylphosphotriester)-DNA + L-cysteinyl-[protein] = 2'-deoxyribonucleotide-DNA + S-methyl-L-cysteinyl-[protein] + H(+). The enzyme catalyses a 6-O-methyl-2'-deoxyguanosine in DNA + L-cysteinyl-[protein] = S-methyl-L-cysteinyl-[protein] + a 2'-deoxyguanosine in DNA. The catalysed reaction is a 4-O-methyl-thymidine in DNA + L-cysteinyl-[protein] = a thymidine in DNA + S-methyl-L-cysteinyl-[protein]. Its function is as follows. Involved in the adaptive response to alkylation damage in DNA caused by alkylating agents. Repairs O6-methylguanine (O6-MeG) and O4-methylthymine (O4-MeT) in DNA. Repairs the methylated nucleobase in DNA by stoichiometrically transferring the methyl group to a cysteine residue in the enzyme (Cys-321). Also specifically repairs the Sp diastereomer of DNA methylphosphotriester lesions by the same mechanism, although the methyl transfer occurs onto a different cysteine residue (Cys-38). Cannot demethylate the other diastereomer, Rp-methylphosphotriester. This is a suicide reaction: the enzyme is irreversibly inactivated. Functionally, the methylation of Ada by methylphosphotriesters in DNA leads to its activation as a transcriptional regulator that activates the transcription of its own gene, ada, and other alkylation resistance genes, alkA, alkB and aidB. This is Bifunctional transcriptional activator/DNA repair enzyme Ada (ada) from Escherichia coli (strain K12).